The following is a 255-amino-acid chain: UPF0246 protein Caul_4480 (255 aa).

It belongs to the UPF0246 family.

The sequence is that of UPF0246 protein Caul_4480 from Caulobacter sp. (strain K31).